The sequence spans 437 residues: Ribosomal protein uS12 methylthiotransferase RimO (437 aa).

Residues 4-114 (PRVSFVSLGC…VMAAVHEAAP (111 aa)) form the MTTase N-terminal domain. 6 residues coordinate [4Fe-4S] cluster: C13, C49, C78, C145, C149, and C152. The Radical SAM core domain occupies 131–369 (LTPRHYAYLK…MQRQQKISAT (239 aa)). In terms of domain architecture, TRAM spans 372 to 437 (AKKVGKRLPV…DAYDLYGSAV (66 aa)).

Belongs to the methylthiotransferase family. RimO subfamily. It depends on [4Fe-4S] cluster as a cofactor.

It is found in the cytoplasm. It carries out the reaction L-aspartate(89)-[ribosomal protein uS12]-hydrogen + (sulfur carrier)-SH + AH2 + 2 S-adenosyl-L-methionine = 3-methylsulfanyl-L-aspartate(89)-[ribosomal protein uS12]-hydrogen + (sulfur carrier)-H + 5'-deoxyadenosine + L-methionine + A + S-adenosyl-L-homocysteine + 2 H(+). In terms of biological role, catalyzes the methylthiolation of an aspartic acid residue of ribosomal protein uS12. The chain is Ribosomal protein uS12 methylthiotransferase RimO from Mesorhizobium japonicum (strain LMG 29417 / CECT 9101 / MAFF 303099) (Mesorhizobium loti (strain MAFF 303099)).